Reading from the N-terminus, the 297-residue chain is Phosphatidylglycerol--prolipoprotein diacylglyceryl transferase (297 aa).

Transmembrane regions (helical) follow at residues 20–40 (FITI…GLFV), 57–77 (EILP…YVIF), 105–125 (AVWE…ISII), and 133–153 (INLK…QSIG). Arg154 provides a ligand contact to a 1,2-diacyl-sn-glycero-3-phospho-(1'-sn-glycerol). The next 3 membrane-spanning stretches (helical) occupy residues 193–213 (PTFL…IIIF), 225–245 (GFIS…IEGL), and 266–286 (AQFI…FLRL).

Belongs to the Lgt family.

The protein resides in the cell inner membrane. The enzyme catalyses L-cysteinyl-[prolipoprotein] + a 1,2-diacyl-sn-glycero-3-phospho-(1'-sn-glycerol) = an S-1,2-diacyl-sn-glyceryl-L-cysteinyl-[prolipoprotein] + sn-glycerol 1-phosphate + H(+). Its pathway is protein modification; lipoprotein biosynthesis (diacylglyceryl transfer). Catalyzes the transfer of the diacylglyceryl group from phosphatidylglycerol to the sulfhydryl group of the N-terminal cysteine of a prolipoprotein, the first step in the formation of mature lipoproteins. The sequence is that of Phosphatidylglycerol--prolipoprotein diacylglyceryl transferase from Prochlorococcus marinus (strain MIT 9215).